The chain runs to 288 residues: ATP synthase gamma chain (288 aa).

Belongs to the ATPase gamma chain family. In terms of assembly, F-type ATPases have 2 components, CF(1) - the catalytic core - and CF(0) - the membrane proton channel. CF(1) has five subunits: alpha(3), beta(3), gamma(1), delta(1), epsilon(1). CF(0) has three main subunits: a, b and c.

The protein resides in the cell inner membrane. Its function is as follows. Produces ATP from ADP in the presence of a proton gradient across the membrane. The gamma chain is believed to be important in regulating ATPase activity and the flow of protons through the CF(0) complex. The polypeptide is ATP synthase gamma chain (Rickettsia akari (strain Hartford)).